The sequence spans 191 residues: NAD(P)H-quinone oxidoreductase subunit 6, chloroplastic (191 aa).

Transmembrane regions (helical) follow at residues 10–30, 32–52, 61–81, 89–109, and 153–173; these read TIFL…ILLT, IVYS…LYLL, AQIL…VMLI, FFVY…SIFL, and FLLP…GAIT.

The protein belongs to the complex I subunit 6 family. As to quaternary structure, NDH is composed of at least 16 different subunits, 5 of which are encoded in the nucleus.

It is found in the plastid. The protein localises to the chloroplast thylakoid membrane. The catalysed reaction is a plastoquinone + NADH + (n+1) H(+)(in) = a plastoquinol + NAD(+) + n H(+)(out). It catalyses the reaction a plastoquinone + NADPH + (n+1) H(+)(in) = a plastoquinol + NADP(+) + n H(+)(out). NDH shuttles electrons from NAD(P)H:plastoquinone, via FMN and iron-sulfur (Fe-S) centers, to quinones in the photosynthetic chain and possibly in a chloroplast respiratory chain. The immediate electron acceptor for the enzyme in this species is believed to be plastoquinone. Couples the redox reaction to proton translocation, and thus conserves the redox energy in a proton gradient. The chain is NAD(P)H-quinone oxidoreductase subunit 6, chloroplastic (ndhG) from Marchantia polymorpha (Common liverwort).